The chain runs to 381 residues: N-acetyl-alpha-D-glucosaminyl L-malate synthase (381 aa).

3 residues coordinate (S)-malate: Ser-16, Tyr-94, and Thr-122. 3 residues coordinate UDP: Asn-206, Gln-262, and Glu-290.

It belongs to the glycosyltransferase group 1 family. Glycosyltransferase 4 subfamily. Dimer of tetramers.

The enzyme catalyses (S)-malate + UDP-N-acetyl-alpha-D-glucosamine = (S)-malyl N-acetyl-alpha-D-glucosaminide + UDP + H(+). Involved in bacillithiol (BSH) biosynthesis. Catalyzes the first step of the pathway, the formation of N-acetylglucosaminylmalate (GlcNAc-Mal) from UDP-N-acetylglucosamine (UDP-GlcNAc) and L-malate. This chain is N-acetyl-alpha-D-glucosaminyl L-malate synthase, found in Bacillus anthracis.